We begin with the raw amino-acid sequence, 134 residues long: (R)-specific enoyl-CoA hydratase (134 aa).

A MaoC-like domain is found at 5 to 119 (SLEVGQKARL…ATLTTRIFTQ (115 aa)). Residues 32–37 (DFNPLH), glycine 55, and phenylalanine 84 each bind a (3R)-3-hydroxyacyl-CoA.

As to quaternary structure, homodimer.

It carries out the reaction a (3R)-3-hydroxyacyl-CoA = a (2E)-enoyl-CoA + H2O. Its function is as follows. Catalyzes the hydration of trans-2-enoyl-CoA with a chain-length of 4-6 carbon atoms, forming the corresponding (3R)-3-hydroxyacyl-CoA. The sequence is that of (R)-specific enoyl-CoA hydratase (phaJ) from Aeromonas caviae (Aeromonas punctata).